Consider the following 370-residue polypeptide: MKLNALQLENYRNYEEVVLDCHPDVNILIGENAQGKTNLLESIYTLALAKSHRTSNDKELIRFNAEYAKIEGELSYRHGKMPLTMFITKKGKKVKVNHLEQHRLTQYVGHLNVVLFAPEDLNIVKGSPQVRRRFIDMELGQISAVYLNDLSQYQRILKQKNNYLKQLQMKQKTDRTMLEVLNQQFAEYALKITLKRVHFINELETLAKPIHSSITDERETLDLEYRPSLKLSEETDEAKLYEEVQKLLQDNMEREIERGVALYGPHRDDLGFKVNEMDAQTYGSQGQQRTTALSIKLAEIELINIEVGEYPILLLDDVLSELDDSRQTHLLSTIQDKVQTFVTTTSVEGIDHEIMKHAKLYRINQGEIIK.

An ATP-binding site is contributed by 30–37 (GENAQGKT).

It belongs to the RecF family.

It is found in the cytoplasm. Its function is as follows. The RecF protein is involved in DNA metabolism; it is required for DNA replication and normal SOS inducibility. RecF binds preferentially to single-stranded, linear DNA. It also seems to bind ATP. This Staphylococcus carnosus (strain TM300) protein is DNA replication and repair protein RecF.